The following is a 185-amino-acid chain: Ribosome-recycling factor (185 aa).

The protein belongs to the RRF family.

The protein resides in the cytoplasm. Functionally, responsible for the release of ribosomes from messenger RNA at the termination of protein biosynthesis. May increase the efficiency of translation by recycling ribosomes from one round of translation to another. The chain is Ribosome-recycling factor from Corynebacterium diphtheriae (strain ATCC 700971 / NCTC 13129 / Biotype gravis).